Here is a 330-residue protein sequence, read N- to C-terminus: Ketol-acid reductoisomerase (NADP(+)) (330 aa).

Residues 2-182 (IHVYYDKDAN…GCTKAGVIET (181 aa)) form the KARI N-terminal Rossmann domain. NADP(+)-binding positions include 25–28 (YGSQ), Arg-48, Ser-51, Ser-53, and 83–86 (DEVQ). His-108 is a catalytic residue. Residue Gly-134 coordinates NADP(+). Residues 183 to 328 (TFKEETETDL…KKLRDMMPWI (146 aa)) enclose the KARI C-terminal knotted domain. Mg(2+) is bound by residues Asp-191, Glu-195, Glu-227, and Glu-231. Ser-252 is a substrate binding site.

This sequence belongs to the ketol-acid reductoisomerase family. It depends on Mg(2+) as a cofactor.

The enzyme catalyses (2R)-2,3-dihydroxy-3-methylbutanoate + NADP(+) = (2S)-2-acetolactate + NADPH + H(+). The catalysed reaction is (2R,3R)-2,3-dihydroxy-3-methylpentanoate + NADP(+) = (S)-2-ethyl-2-hydroxy-3-oxobutanoate + NADPH + H(+). The protein operates within amino-acid biosynthesis; L-isoleucine biosynthesis; L-isoleucine from 2-oxobutanoate: step 2/4. It functions in the pathway amino-acid biosynthesis; L-valine biosynthesis; L-valine from pyruvate: step 2/4. Its function is as follows. Involved in the biosynthesis of branched-chain amino acids (BCAA). Catalyzes an alkyl-migration followed by a ketol-acid reduction of (S)-2-acetolactate (S2AL) to yield (R)-2,3-dihydroxy-isovalerate. In the isomerase reaction, S2AL is rearranged via a Mg-dependent methyl migration to produce 3-hydroxy-3-methyl-2-ketobutyrate (HMKB). In the reductase reaction, this 2-ketoacid undergoes a metal-dependent reduction by NADPH to yield (R)-2,3-dihydroxy-isovalerate. The sequence is that of Ketol-acid reductoisomerase (NADP(+)) from Halothermothrix orenii (strain H 168 / OCM 544 / DSM 9562).